The primary structure comprises 209 residues: Putative 3-methyladenine DNA glycosylase (209 aa).

This sequence belongs to the DNA glycosylase MPG family.

The sequence is that of Putative 3-methyladenine DNA glycosylase from Lactiplantibacillus plantarum (strain ATCC BAA-793 / NCIMB 8826 / WCFS1) (Lactobacillus plantarum).